A 107-amino-acid polypeptide reads, in one-letter code: Heme-degrading monooxygenase (107 aa).

Residues 2 to 94 (IIVTNTTKIT…YILDNKIAYY (93 aa)) form the ABM domain. Residue Asn6 coordinates Fe cation. His76 serves as a coordination point for heme.

The protein belongs to the antibiotic biosynthesis monooxygenase family. Heme-degrading monooxygenase IsdG subfamily. In terms of assembly, homodimer.

It localises to the cytoplasm. It carries out the reaction heme b + 3 reduced [NADPH--hemoprotein reductase] + 3 O2 = biliverdin IXalpha + CO + Fe(2+) + 3 oxidized [NADPH--hemoprotein reductase] + 3 H2O + H(+). In terms of biological role, allows bacterial pathogens to use the host heme as an iron source. Catalyzes the oxidative degradation of the heme macrocyclic porphyrin ring to the biliverdin in the presence of a suitable electron donor such as ascorbate or NADPH--cytochrome P450 reductase, with subsequent release of free iron. In Bacillus mycoides (strain KBAB4) (Bacillus weihenstephanensis), this protein is Heme-degrading monooxygenase.